The primary structure comprises 442 residues: tRNA modification GTPase MnmE (442 aa).

(6S)-5-formyl-5,6,7,8-tetrahydrofolate is bound by residues arginine 23, glutamate 82, and lysine 121. A TrmE-type G domain is found at glycine 215–glutamine 364. K(+) is bound at residue asparagine 225. GTP contacts are provided by residues asparagine 225–serine 230, threonine 244–threonine 250, aspartate 269–glycine 272, and asparagine 325–aspartate 328. Serine 229 contributes to the Mg(2+) binding site. Positions 244, 246, and 249 each coordinate K(+). Threonine 250 lines the Mg(2+) pocket. Lysine 442 provides a ligand contact to (6S)-5-formyl-5,6,7,8-tetrahydrofolate.

Belongs to the TRAFAC class TrmE-Era-EngA-EngB-Septin-like GTPase superfamily. TrmE GTPase family. Homodimer. Heterotetramer of two MnmE and two MnmG subunits. The cofactor is K(+).

Its subcellular location is the cytoplasm. Its function is as follows. Exhibits a very high intrinsic GTPase hydrolysis rate. Involved in the addition of a carboxymethylaminomethyl (cmnm) group at the wobble position (U34) of certain tRNAs, forming tRNA-cmnm(5)s(2)U34. The polypeptide is tRNA modification GTPase MnmE (Chlamydia pneumoniae (Chlamydophila pneumoniae)).